We begin with the raw amino-acid sequence, 658 residues long: MKDKFELVSKYSPQGDQPRAIEQLVAGLKKGLKHQTLLGATGTGKTFTVSNVIQEVNKPTLVMAHNKTLAGQLYSEFKEFFPNNAVEYFVSYYDYYQPEAYVPQSDTYIEKDASINDEIDKLRHSATAALFERRDVIIIASVSCIYGLGSPVEYGEMLVSLRVGMEISRDQLLRKLVDIQYDRNDIDFQRGRFRVRGDVVEIFPASRDEHCMRIEFFGDEIERIREVDALTGEIIGDREHVSIFPASHFVTRPDIMKKAIVNIKAELEDRLKVLRAENKLLEAQRLEQRTNYDIEMMEEMGYCSGIENYSRHLSLRPAGVTPYTLLDYFPDDFQIVIDESHVTMPQIRGMFNGDQARKQMLVDHGFRLPSALDNRPLRLEEFEKHINQIMFISATPGPYELEKNPDVIEQIIRPTGLLDPIVEIRPIQGQIDDLMDEINDRVEKNERVLITTLTKKMSEDLTNYLKEAGVKVQYLHSEVKTLERIEIIRDLRLGVYDVIVGINLLREGIDLPEVSLVAILDADKEGFLRSERSLIQTMGRAARNENGRVIMYADKMTDSMRNSISETERRRKIQIEYNEKHGITPKTIRKEIRGIIAATSAADEREAIKQHDLSKMSKKERDIFIEGMEHEMKEAAKALDFERAAELRDALLEIKAEG.

Residues 26–414 (AGLKKGLKHQ…PDVIEQIIRP (389 aa)) form the Helicase ATP-binding domain. Residue 39 to 46 (GATGTGKT) participates in ATP binding. Positions 92–115 (YYDYYQPEAYVPQSDTYIEKDASI) match the Beta-hairpin motif. Residues 430–592 (QIDDLMDEIN…ITPKTIRKEI (163 aa)) form the Helicase C-terminal domain. The UVR domain occupies 622–658 (DIFIEGMEHEMKEAAKALDFERAAELRDALLEIKAEG).

This sequence belongs to the UvrB family. As to quaternary structure, forms a heterotetramer with UvrA during the search for lesions. Interacts with UvrC in an incision complex.

The protein resides in the cytoplasm. In terms of biological role, the UvrABC repair system catalyzes the recognition and processing of DNA lesions. A damage recognition complex composed of 2 UvrA and 2 UvrB subunits scans DNA for abnormalities. Upon binding of the UvrA(2)B(2) complex to a putative damaged site, the DNA wraps around one UvrB monomer. DNA wrap is dependent on ATP binding by UvrB and probably causes local melting of the DNA helix, facilitating insertion of UvrB beta-hairpin between the DNA strands. Then UvrB probes one DNA strand for the presence of a lesion. If a lesion is found the UvrA subunits dissociate and the UvrB-DNA preincision complex is formed. This complex is subsequently bound by UvrC and the second UvrB is released. If no lesion is found, the DNA wraps around the other UvrB subunit that will check the other stand for damage. The sequence is that of UvrABC system protein B from Listeria innocua serovar 6a (strain ATCC BAA-680 / CLIP 11262).